A 390-amino-acid polypeptide reads, in one-letter code: Dihydroorotase (390 aa).

The Zn(2+) site is built by His54 and His56. Substrate contacts are provided by residues 56-58 (HIR) and Asn88. Zn(2+) is bound by residues Lys136, His160, His197, and Asp259. The residue at position 136 (Lys136) is an N6-carboxylysine. Asp259 is a catalytic residue. Substrate-binding positions include His263 and 277 to 278 (PG).

The protein belongs to the metallo-dependent hydrolases superfamily. DHOase family. Class I DHOase subfamily. The cofactor is Zn(2+).

It catalyses the reaction (S)-dihydroorotate + H2O = N-carbamoyl-L-aspartate + H(+). It participates in pyrimidine metabolism; UMP biosynthesis via de novo pathway; (S)-dihydroorotate from bicarbonate: step 3/3. Functionally, catalyzes the reversible cyclization of carbamoyl aspartate to dihydroorotate. The sequence is that of Dihydroorotase from Saccharolobus solfataricus (strain ATCC 35092 / DSM 1617 / JCM 11322 / P2) (Sulfolobus solfataricus).